We begin with the raw amino-acid sequence, 310 residues long: MDGFIVVDKSAGMTSHDVVSAVRRIAGQKKVGHTGTLDPFATGVLPVALGEATKAIPFLDESIKEYRAVMKLGVATDTQDYTGKVLHESDWSHVTTSALNEICRMFVGKLSQVPPMFSALKQNGVPLYKLARQGAEVPRQPREIEIYSLVIEAVNLPEVAFTVRCSRGTYVRTLANDIGGKLGCGAHLLQLHRSLSGPFSINNAITLDDWARRMQDGRAGETLVSPFAALSHLKDFILTGKGAAKVANGVVPALEDFQVLSECELLRDELVRMSFGGTLLAVAKAGLPGDWKMLKNLKLSRVFNLDNSFT.

Asp-38 functions as the Nucleophile in the catalytic mechanism.

It belongs to the pseudouridine synthase TruB family. Type 1 subfamily.

It carries out the reaction uridine(55) in tRNA = pseudouridine(55) in tRNA. Responsible for synthesis of pseudouridine from uracil-55 in the psi GC loop of transfer RNAs. The protein is tRNA pseudouridine synthase B of Geotalea uraniireducens (strain Rf4) (Geobacter uraniireducens).